The sequence spans 177 residues: Large ribosomal subunit protein uL6 (177 aa).

The protein belongs to the universal ribosomal protein uL6 family. In terms of assembly, part of the 50S ribosomal subunit.

In terms of biological role, this protein binds to the 23S rRNA, and is important in its secondary structure. It is located near the subunit interface in the base of the L7/L12 stalk, and near the tRNA binding site of the peptidyltransferase center. This Pseudomonas putida (strain W619) protein is Large ribosomal subunit protein uL6.